Reading from the N-terminus, the 409-residue chain is Outer membrane protein assembly factor BamB (409 aa).

Residues 1-34 (MAGNILLLILDYVFHAGSRTLRVCILSLLILLSG) form the signal peptide. Cys35 carries N-palmitoyl cysteine lipidation. Cys35 carries S-diacylglycerol cysteine lipidation.

The protein belongs to the BamB family. In terms of assembly, part of the Bam complex.

The protein resides in the cell outer membrane. In terms of biological role, part of the outer membrane protein assembly complex, which is involved in assembly and insertion of beta-barrel proteins into the outer membrane. The polypeptide is Outer membrane protein assembly factor BamB (Nitrosomonas eutropha (strain DSM 101675 / C91 / Nm57)).